Consider the following 506-residue polypeptide: Glutamate--tRNA ligase (506 aa).

The 'HIGH' region motif lies at Pro-24 to Leu-34. The tract at residues Thr-124 to Asp-147 is disordered. Over residues Val-128–Asp-147 the composition is skewed to basic and acidic residues. A 'KMSKS' region motif is present at residues Lys-268–Arg-272. Residue Lys-271 participates in ATP binding.

Belongs to the class-I aminoacyl-tRNA synthetase family. Glutamate--tRNA ligase type 1 subfamily. Monomer.

The protein resides in the cytoplasm. The enzyme catalyses tRNA(Glu) + L-glutamate + ATP = L-glutamyl-tRNA(Glu) + AMP + diphosphate. Its function is as follows. Catalyzes the attachment of glutamate to tRNA(Glu) in a two-step reaction: glutamate is first activated by ATP to form Glu-AMP and then transferred to the acceptor end of tRNA(Glu). The chain is Glutamate--tRNA ligase from Kocuria rhizophila (strain ATCC 9341 / DSM 348 / NBRC 103217 / DC2201).